The sequence spans 132 residues: Fatty acid-binding protein, adipocyte (132 aa).

The Nuclear localization signal motif lies at 22 to 32 (KELGVGFATRK). (9Z,12Z)-octadecadienoate-binding residues include Arg107 and Arg127.

Belongs to the calycin superfamily. Fatty-acid binding protein (FABP) family. As to quaternary structure, monomer.

It localises to the cytoplasm. It is found in the nucleus. Its function is as follows. Lipid transport protein in adipocytes. Binds both long chain fatty acids and retinoic acid. Delivers long-chain fatty acids and retinoic acid to their cognate receptors in the nucleus. Has the highest binding affinity for linoleic acid and decreasing relative affinity for eicosapentaenoic acid (EPA), alpha-linolenic acid (ALA), docosahexaenoic acid (DHA), oleic acid, palmitic acid and stearic acid, respectively. The chain is Fatty acid-binding protein, adipocyte from Pygoscelis papua (Gentoo penguin).